The primary structure comprises 666 residues: Hybrid PKS-NRPS synthetase pytA (666 aa).

The region spanning 1–340 (MDPQQRLLLE…GTNAHAILEE (340 aa)) is the Ketosynthase family 3 (KS3) domain. Residues cysteine 87, histidine 222, and histidine 260 each act as for beta-ketoacyl synthase activity in the active site. The interval 455-665 (VFTGQGAQWF…VFVHSLVIKR (211 aa)) is malonyl-CoA:ACP transacylase (MAT) domain. Serine 548 (for malonyltransferase activity) is an active-site residue.

It in the C-terminal section; belongs to the NRP synthetase family.

It participates in secondary metabolite biosynthesis. Hybrid PKS-NRPS synthetase; part of the gene cluster that mediates the biosynthesis of pyranterreones, a family of antioxidative compounds. The first step of pyranonigrins biosynthesis is performed by the hybrid PKS-NRPS synthetase pytA that condenses 4 malonyl-CoA units ato the acetyl starter unit by the modular PKS of pytA. The acyl chain is then connected to an L-serine through the amide bond by the modular NRPS of pytA. A tetramic acid is formed and released from the PKS-NRPS pytA to give pyranterreone 5 with the help of the thioesterase pytI. Pyranterreone 5 could be methylated by pytC to afford pyranterreone 6. Both pyranterreones 5 and 6 are subsequently oxidized by the FAD-linked oxidoreductase pytB and the cytochrome P450 monooxygenase pytD to form the fused gamma-pyrone core, resulting in pyranterreones 7 and 11, respectively. The hydroxy group at C-8 of pyranterreones 7 and 11 are dehydrated by the aspartyl protease pytH to form a delta-7 double bond to give pyranterreones 3 and 1, 2 accordingly. The exo-methylene of pyranterreone 3 could be reduced into a pendant methyl by reductase pytE to provide pyranterreone 4, also known as cordylactam. Pyranterreone 4 can be reconverted to pyranterreone 3 through pytB-catalyzed dehydrogenation or further oxidized to pyranterreones 9 and 10. In Aspergillus terreus (strain NIH 2624 / FGSC A1156), this protein is Hybrid PKS-NRPS synthetase pytA.